Consider the following 298-residue polypeptide: Palmitoyl-protein thioesterase 1 (298 aa).

The first 16 residues, 1–16 (MRYFPLLLCLLAITTA), serve as a signal peptide directing secretion. The N-linked (GlcNAc...) asparagine glycan is linked to N20. 3 disulfides stabilise this stretch: C37–C38, C88–C120, and C144–C151. The Nucleophile role is filled by S107. Residue D224 is part of the active site. An N-linked (GlcNAc...) asparagine glycan is attached at N250. The active site involves H280.

It belongs to the palmitoyl-protein thioesterase family.

It carries out the reaction S-hexadecanoyl-L-cysteinyl-[protein] + H2O = L-cysteinyl-[protein] + hexadecanoate + H(+). In terms of biological role, removes thioester-linked fatty acyl groups such as palmitate (hexadecanoate) from modified cysteine residues in proteins or peptides. The polypeptide is Palmitoyl-protein thioesterase 1 (ppt-1) (Caenorhabditis elegans).